We begin with the raw amino-acid sequence, 138 residues long: MRALWIVAVLLVGVEGHLLQFNKMIKFETRKNAIPFYAFYGCYCGWGGRGRPKDATDRCCFVHDCCYGKLAKCNTKWDIYPYSLKSGYITCGKGTWCEEQICECDRVAAECLRRSLSTYKYGYMFYPDSRCRGPSETC.

An N-terminal signal peptide occupies residues 1-16; it reads MRALWIVAVLLVGVEG. 7 cysteine pairs are disulfide-bonded: Cys-42–Cys-131, Cys-44–Cys-60, Cys-59–Cys-111, Cys-65–Cys-138, Cys-66–Cys-104, Cys-73–Cys-97, and Cys-91–Cys-102. Residues Tyr-43, Gly-45, and Gly-47 each contribute to the Ca(2+) site. His-63 is a catalytic residue. A Ca(2+)-binding site is contributed by Asp-64. Residue Asp-105 is part of the active site.

Heterodimer of an acidic subunit and a basic chain. The acidic subunit is non-toxic, without enzymatic activity and comprises 3 peptides that are cross-linked by 7 disulfide bridges. The basic subunit is toxic, has phospholipase A2 activity and is composed of a single chain. It depends on Ca(2+) as a cofactor. In terms of tissue distribution, expressed by the venom gland.

It is found in the secreted. It carries out the reaction a 1,2-diacyl-sn-glycero-3-phosphocholine + H2O = a 1-acyl-sn-glycero-3-phosphocholine + a fatty acid + H(+). Snake venom phospholipase A2 (PLA2) that inhibits neuromuscular transmission by blocking acetylcholine release from the nerve termini. PLA2 catalyzes the calcium-dependent hydrolysis of the 2-acyl groups in 3-sn-phosphoglycerides. The chain is Basic phospholipase A2 Mtx-b from Crotalus scutulatus scutulatus (Mojave rattlesnake).